Reading from the N-terminus, the 502-residue chain is Lysine--tRNA ligase (502 aa).

Glutamate 409 and glutamate 416 together coordinate Mg(2+).

This sequence belongs to the class-II aminoacyl-tRNA synthetase family. Homodimer. Mg(2+) serves as cofactor.

It is found in the cytoplasm. It carries out the reaction tRNA(Lys) + L-lysine + ATP = L-lysyl-tRNA(Lys) + AMP + diphosphate. The sequence is that of Lysine--tRNA ligase from Prochlorococcus marinus (strain SARG / CCMP1375 / SS120).